The primary structure comprises 191 residues: Protein GrpE (191 aa).

A compositionally biased stretch (basic and acidic residues) spans 1–13 (MSEKKNKKEKLAE). Positions 1-40 (MSEKKNKKEKLAEEIEQEELNSLDESVETVEEEATEETLT) are disordered. Positions 14-40 (EIEQEELNSLDESVETVEEEATEETLT) are enriched in acidic residues.

Belongs to the GrpE family. In terms of assembly, homodimer.

Its subcellular location is the cytoplasm. Its function is as follows. Participates actively in the response to hyperosmotic and heat shock by preventing the aggregation of stress-denatured proteins, in association with DnaK and GrpE. It is the nucleotide exchange factor for DnaK and may function as a thermosensor. Unfolded proteins bind initially to DnaJ; upon interaction with the DnaJ-bound protein, DnaK hydrolyzes its bound ATP, resulting in the formation of a stable complex. GrpE releases ADP from DnaK; ATP binding to DnaK triggers the release of the substrate protein, thus completing the reaction cycle. Several rounds of ATP-dependent interactions between DnaJ, DnaK and GrpE are required for fully efficient folding. This chain is Protein GrpE, found in Listeria innocua serovar 6a (strain ATCC BAA-680 / CLIP 11262).